The following is a 224-amino-acid chain: dTTP/UTP pyrophosphatase (224 aa).

Catalysis depends on D77, which acts as the Proton acceptor.

Belongs to the Maf family. YhdE subfamily. It depends on a divalent metal cation as a cofactor.

The protein resides in the cytoplasm. The catalysed reaction is dTTP + H2O = dTMP + diphosphate + H(+). It carries out the reaction UTP + H2O = UMP + diphosphate + H(+). Nucleoside triphosphate pyrophosphatase that hydrolyzes dTTP and UTP. May have a dual role in cell division arrest and in preventing the incorporation of modified nucleotides into cellular nucleic acids. This is dTTP/UTP pyrophosphatase from Dehalococcoides mccartyi (strain ATCC BAA-2266 / KCTC 15142 / 195) (Dehalococcoides ethenogenes (strain 195)).